Consider the following 386-residue polypeptide: 4-hydroxy-3-methylbut-2-en-1-yl diphosphate synthase (flavodoxin) (386 aa).

Cysteine 289, cysteine 292, cysteine 324, and glutamate 331 together coordinate [4Fe-4S] cluster.

The protein belongs to the IspG family. Requires [4Fe-4S] cluster as cofactor.

The catalysed reaction is (2E)-4-hydroxy-3-methylbut-2-enyl diphosphate + oxidized [flavodoxin] + H2O + 2 H(+) = 2-C-methyl-D-erythritol 2,4-cyclic diphosphate + reduced [flavodoxin]. The protein operates within isoprenoid biosynthesis; isopentenyl diphosphate biosynthesis via DXP pathway; isopentenyl diphosphate from 1-deoxy-D-xylulose 5-phosphate: step 5/6. Converts 2C-methyl-D-erythritol 2,4-cyclodiphosphate (ME-2,4cPP) into 1-hydroxy-2-methyl-2-(E)-butenyl 4-diphosphate. The chain is 4-hydroxy-3-methylbut-2-en-1-yl diphosphate synthase (flavodoxin) from Nitratidesulfovibrio vulgaris (strain ATCC 29579 / DSM 644 / CCUG 34227 / NCIMB 8303 / VKM B-1760 / Hildenborough) (Desulfovibrio vulgaris).